The chain runs to 131 residues: Nitrogenase-stabilizing/protective protein NifW (131 aa).

Belongs to the NifW family. In terms of assembly, homotrimer; associates with NifD.

Functionally, may protect the nitrogenase Fe-Mo protein from oxidative damage. The chain is Nitrogenase-stabilizing/protective protein NifW from Frankia alni (strain DSM 45986 / CECT 9034 / ACN14a).